A 132-amino-acid chain; its full sequence is S-protein homolog 8 (132 aa).

Residues 1 to 20 form the signal peptide; sequence MHSLSWFLLVIGLSVGLSSG.

It belongs to the plant self-incompatibility (S1) protein family. As to expression, mostly expressed in seedlings, stems, leaves and floral tissues, and, to a lower extent, in roots.

The protein localises to the secreted. The sequence is that of S-protein homolog 8 from Arabidopsis thaliana (Mouse-ear cress).